A 66-amino-acid chain; its full sequence is Large ribosomal subunit protein bL35 (66 aa).

Composition is skewed to basic residues over residues 1–15 (MPKLKTKSSAKKRFK) and 28–45 (TKRHGMTKRSKRSLRTRR). The disordered stretch occupies residues 1–49 (MPKLKTKSSAKKRFKVTASGRVMSAQSTKRHGMTKRSKRSLRTRRGIAQ).

Belongs to the bacterial ribosomal protein bL35 family.

The polypeptide is Large ribosomal subunit protein bL35 (Anaplasma marginale (strain Florida)).